The chain runs to 191 residues: NF-kappa-B inhibitor-interacting Ras-like protein 2 (191 aa).

The tract at residues 1–191 is small GTPase-like; the sequence is MGKSCKVVVC…KNKGSGSVDG (191 aa). 11-18 lines the GTP pocket; that stretch reads GQAAVGKT. Residues 35-43 carry the Effector region motif; that stretch reads MIETQEDIY. Residues 61–65 and 120–123 contribute to the GTP site; these read DTRGL and NKCD. Residues 170–191 are disordered; the sequence is QPQSKSAFPLSRKNKGSGSVDG.

It belongs to the small GTPase superfamily. Ras family. KappaB-Ras subfamily.

The protein localises to the cytoplasm. In terms of biological role, atypical Ras-like protein that acts as a potent regulator of NF-kappa-B activity by preventing the degradation of NF-kappa-B inhibitor beta (NFKBIB) by most signals, explaining why NFKBIB is more resistant to degradation. This is NF-kappa-B inhibitor-interacting Ras-like protein 2 (NKIRAS2) from Gallus gallus (Chicken).